Here is a 477-residue protein sequence, read N- to C-terminus: MTDTTASGTARVRTRFAPSPTGFIHLGNIRSALYPWAFARAMGGDFILRIEDTDQQRSSQAALDVILESMQWLGMEPDEGPFHQMQRMERYRAVLAQLQAAGHAYPCYMSVAELDALREKQLAAKEKPRYDGSWRPEPGKTLPPVPAGMSPVLRFRNPQGGVVAWDDKVKGRIEIRNDELDDLVLARPDGTPTYNFCVVVDDIDMAITHVIRGDDHVNNTPRQINIFHALGKEPPVYAHLPTVLNEQGEKLSKRHGAKPVTQYRDEGYLPDAMINYLARLGWSHGDDEIFSRAQFLQWFNLDHLGRSAAQFDEAKLRWINAQHLKAMADDALAALVAAQLQRRGVAQQELANGLANGRLARICALFKDRCDTTVALANWAQVFYADVTPAETERALHVTEAIAPALDALADALSGCEWNRPAIAAAFKQVLASQGLKMPQLAMPTRVLTVGTAHTPSVDALLELMGREKVLARLRNR.

Residues 18-28 (PSPTGFIHLGN) carry the 'HIGH' region motif. Residues 128-138 (PRYDGSWRPEP) show a composition bias toward basic and acidic residues. The tract at residues 128-151 (PRYDGSWRPEPGKTLPPVPAGMSP) is disordered. Positions 250-254 (KLSKR) match the 'KMSKS' region motif. Residue lysine 253 participates in ATP binding.

It belongs to the class-I aminoacyl-tRNA synthetase family. Glutamate--tRNA ligase type 1 subfamily. As to quaternary structure, monomer.

Its subcellular location is the cytoplasm. It carries out the reaction tRNA(Glu) + L-glutamate + ATP = L-glutamyl-tRNA(Glu) + AMP + diphosphate. In terms of biological role, catalyzes the attachment of glutamate to tRNA(Glu) in a two-step reaction: glutamate is first activated by ATP to form Glu-AMP and then transferred to the acceptor end of tRNA(Glu). The chain is Glutamate--tRNA ligase from Verminephrobacter eiseniae (strain EF01-2).